The chain runs to 306 residues: tRNA-cytidine(32) 2-sulfurtransferase (306 aa).

The PP-loop motif motif lies at 49-54 (SGGKDS). Residues C124, C127, and C215 each contribute to the [4Fe-4S] cluster site.

Belongs to the TtcA family. As to quaternary structure, homodimer. It depends on Mg(2+) as a cofactor. [4Fe-4S] cluster is required as a cofactor.

The protein resides in the cytoplasm. The enzyme catalyses cytidine(32) in tRNA + S-sulfanyl-L-cysteinyl-[cysteine desulfurase] + AH2 + ATP = 2-thiocytidine(32) in tRNA + L-cysteinyl-[cysteine desulfurase] + A + AMP + diphosphate + H(+). The protein operates within tRNA modification. In terms of biological role, catalyzes the ATP-dependent 2-thiolation of cytidine in position 32 of tRNA, to form 2-thiocytidine (s(2)C32). The sulfur atoms are provided by the cysteine/cysteine desulfurase (IscS) system. In Azoarcus sp. (strain BH72), this protein is tRNA-cytidine(32) 2-sulfurtransferase.